The following is a 526-amino-acid chain: Peptide chain release factor 3 (526 aa).

Residues 8–277 form the tr-type G domain; the sequence is GKRRTFAIIS…GLTDWAPAPQ (270 aa). Residues 17–24, 85–89, and 139–142 each bind GTP; these read SHPDAGKT, DTPGH, and NKLD.

It belongs to the TRAFAC class translation factor GTPase superfamily. Classic translation factor GTPase family. PrfC subfamily.

It localises to the cytoplasm. Its function is as follows. Increases the formation of ribosomal termination complexes and stimulates activities of RF-1 and RF-2. It binds guanine nucleotides and has strong preference for UGA stop codons. It may interact directly with the ribosome. The stimulation of RF-1 and RF-2 is significantly reduced by GTP and GDP, but not by GMP. This Aliivibrio fischeri (strain ATCC 700601 / ES114) (Vibrio fischeri) protein is Peptide chain release factor 3.